The following is a 271-amino-acid chain: Putative pyruvate, phosphate dikinase regulatory protein (271 aa).

147-154 (GLSRTSKT) is a binding site for ADP.

The protein belongs to the pyruvate, phosphate/water dikinase regulatory protein family. PDRP subfamily.

The catalysed reaction is N(tele)-phospho-L-histidyl/L-threonyl-[pyruvate, phosphate dikinase] + ADP = N(tele)-phospho-L-histidyl/O-phospho-L-threonyl-[pyruvate, phosphate dikinase] + AMP + H(+). The enzyme catalyses N(tele)-phospho-L-histidyl/O-phospho-L-threonyl-[pyruvate, phosphate dikinase] + phosphate + H(+) = N(tele)-phospho-L-histidyl/L-threonyl-[pyruvate, phosphate dikinase] + diphosphate. Functionally, bifunctional serine/threonine kinase and phosphorylase involved in the regulation of the pyruvate, phosphate dikinase (PPDK) by catalyzing its phosphorylation/dephosphorylation. The sequence is that of Putative pyruvate, phosphate dikinase regulatory protein from Clostridium tetani (strain Massachusetts / E88).